The primary structure comprises 245 residues: 1-(5-phosphoribosyl)-5-[(5-phosphoribosylamino)methylideneamino] imidazole-4-carboxamide isomerase (245 aa).

Catalysis depends on aspartate 7, which acts as the Proton acceptor. Residue aspartate 129 is the Proton donor of the active site.

This sequence belongs to the HisA/HisF family.

Its subcellular location is the cytoplasm. It carries out the reaction 1-(5-phospho-beta-D-ribosyl)-5-[(5-phospho-beta-D-ribosylamino)methylideneamino]imidazole-4-carboxamide = 5-[(5-phospho-1-deoxy-D-ribulos-1-ylimino)methylamino]-1-(5-phospho-beta-D-ribosyl)imidazole-4-carboxamide. It participates in amino-acid biosynthesis; L-histidine biosynthesis; L-histidine from 5-phospho-alpha-D-ribose 1-diphosphate: step 4/9. The polypeptide is 1-(5-phosphoribosyl)-5-[(5-phosphoribosylamino)methylideneamino] imidazole-4-carboxamide isomerase (Shewanella pealeana (strain ATCC 700345 / ANG-SQ1)).